The chain runs to 218 residues: Uracil-DNA glycosylase (218 aa).

The Proton acceptor role is filled by aspartate 68.

This sequence belongs to the uracil-DNA glycosylase (UDG) superfamily. UNG family. Homodimer. Interacts with protein OPG148. Component of the Uracil-DNA glycosylase(UDG)-OPG148-polymerase complex; OPG148 and UDG form a heterodimeric processivity factor that associates with OPG71 to form the processive polymerase holoenzyme.

The catalysed reaction is Hydrolyzes single-stranded DNA or mismatched double-stranded DNA and polynucleotides, releasing free uracil.. Plays an essential role in viral replication as a component of the DNA polymerase processivity factor. Excises uracil residues from the DNA which can arise as a result of misincorporation of dUMP residues by DNA polymerase or due to deamination of cytosine. The chain is Uracil-DNA glycosylase (OPG116) from Homo sapiens (Human).